Reading from the N-terminus, the 315-residue chain is Protein air1 (315 aa).

Serine 12 and serine 16 each carry phosphoserine. Residues 43 to 56 (EKHDFQGSDDHDSS) show a composition bias toward basic and acidic residues. A disordered region spans residues 43 to 68 (EKHDFQGSDDHDSSTDLSDSTLEDVE). 3 CCHC-type zinc fingers span residues 89-106 (IVCH…DCPH), 127-144 (KKCM…RCSE), and 189-206 (KFCY…DCTL). Positions 244–315 (LERREQNRNQ…TSKKNRKRKW (72 aa)) are disordered. Polar residues predominate over residues 287–297 (SEENGNLSFHS). A compositionally biased stretch (basic residues) spans 303–315 (FTKTSKKNRKRKW).

This sequence belongs to the AIR1 family. In terms of assembly, component of the TRAMP complex composed of at least cid14, mtr4, and air1.

It localises to the nucleus. The protein resides in the nucleolus. In terms of biological role, component of the TRAMP (TRF4) and TRAMP5 complexes which have a poly(A) RNA polymerase activity and are involved in a post-transcriptional quality control mechanism limiting inappropriate expression of genetic information. Polyadenylation is required for the degradative activity of the exosome on several of its nuclear RNA substrates like cryptic transcripts generated by RNA polymerase II and III, or hypomethylated pre-tRNAi-Met. Both complexes polyadenylate RNA processing and degradation intermediates of snRNAs, snoRNAs and mRNAs that accumulate in strains lacking a functional exosome. This chain is Protein air1 (air1), found in Schizosaccharomyces pombe (strain 972 / ATCC 24843) (Fission yeast).